A 60-amino-acid polypeptide reads, in one-letter code: MDTKLLELLVCPVTKGPLVYDREKQELISRSARLAYPVRDGLPVLLESEARTLTDEELGL.

The protein belongs to the UPF0434 family.

In Polaromonas sp. (strain JS666 / ATCC BAA-500), this protein is UPF0434 protein Bpro_2950.